The following is a 378-amino-acid chain: SPbeta prophage-derived uncharacterized protein YorJ (378 aa).

The chain is SPbeta prophage-derived uncharacterized protein YorJ (yorJ) from Bacillus subtilis (strain 168).